Consider the following 409-residue polypeptide: Failed axon connections homolog (409 aa).

Residues 68 to 88 (YLTGGALLAAAAYLLHELLVI) form a helical membrane-spanning segment. The disordered stretch occupies residues 372 to 409 (DEGAENSFSRTPDTDFTGHSLFDSDVDMDDYTEHEQCK).

It belongs to the FAX family.

The protein localises to the membrane. Functionally, may play a role in axonal development. In Rattus norvegicus (Rat), this protein is Failed axon connections homolog (Faxc).